Here is a 120-residue protein sequence, read N- to C-terminus: Large ribosomal subunit protein uL22 (120 aa).

The protein belongs to the universal ribosomal protein uL22 family. Part of the 50S ribosomal subunit.

Functionally, this protein binds specifically to 23S rRNA; its binding is stimulated by other ribosomal proteins, e.g. L4, L17, and L20. It is important during the early stages of 50S assembly. It makes multiple contacts with different domains of the 23S rRNA in the assembled 50S subunit and ribosome. The globular domain of the protein is located near the polypeptide exit tunnel on the outside of the subunit, while an extended beta-hairpin is found that lines the wall of the exit tunnel in the center of the 70S ribosome. The sequence is that of Large ribosomal subunit protein uL22 from Corynebacterium urealyticum (strain ATCC 43042 / DSM 7109).